Consider the following 336-residue polypeptide: Fructose-1,6-bisphosphatase class 1 (336 aa).

Residues glutamate 90, aspartate 112, leucine 114, and aspartate 115 each coordinate Mg(2+). Substrate-binding positions include 115–118 (DGSS), asparagine 211, and lysine 277. Residue glutamate 283 participates in Mg(2+) binding.

It belongs to the FBPase class 1 family. Homotetramer. Requires Mg(2+) as cofactor.

It localises to the cytoplasm. It carries out the reaction beta-D-fructose 1,6-bisphosphate + H2O = beta-D-fructose 6-phosphate + phosphate. Its pathway is carbohydrate biosynthesis; gluconeogenesis. This Pseudomonas putida (strain W619) protein is Fructose-1,6-bisphosphatase class 1.